The chain runs to 130 residues: ATP synthase epsilon chain (130 aa).

It belongs to the ATPase epsilon chain family. As to quaternary structure, F-type ATPases have 2 components, CF(1) - the catalytic core - and CF(0) - the membrane proton channel. CF(1) has five subunits: alpha(3), beta(3), gamma(1), delta(1), epsilon(1). CF(0) has three main subunits: a, b and c.

The protein resides in the cell inner membrane. In terms of biological role, produces ATP from ADP in the presence of a proton gradient across the membrane. The sequence is that of ATP synthase epsilon chain from Pelagibacter ubique (strain HTCC1062).